Consider the following 206-residue polypeptide: Macrophage immunometabolism regulator (206 aa).

Met-1 bears the N-acetylmethionine mark. The segment at Met-1–Cys-41 is disordered. Phosphoserine is present on residues Ser-25, Ser-140, and Ser-167.

It belongs to the UNC119-binding protein family. Interacts with UNC119 and UNC119B; interaction preferentially takes place when UNC119 and UNC119B are unliganded with myristoylated proteins. Post-translationally, phosphorylated. In terms of tissue distribution, high expression in normal macrophages, monocytes, and cultured rheumatoid arthritis synovial fibroblasts (RASFs), with lower expression in B- and T-cells, and little to no expression in other tissues and cell lines.

Its subcellular location is the cytoplasm. It localises to the cell projection. It is found in the cilium. Its function is as follows. Regulates the macrophage function, by enhancing the resolution of inflammation and wound repair functions mediated by M2 macrophages. The regulation of macrophage function is, due at least in part, to its ability to inhibit glycolysis. May also play a role in trafficking of proteins via its interaction with UNC119 and UNC119B cargo adapters: may help the release of UNC119 and UNC119B cargo or the recycling of UNC119 and UNC119B. May play a role in ciliary membrane localization via its interaction with UNC119B and protein transport into photoreceptor cells. In Homo sapiens (Human), this protein is Macrophage immunometabolism regulator.